A 696-amino-acid chain; its full sequence is Mitosis initiation protein fs(1)Ya (696 aa).

Disordered stretches follow at residues 245 to 285 (NAST…RAWK), 336 to 379 (EHSS…YSTS), and 457 to 492 (IKFETPPKSSQQMRSNGEGDETKDQFFTPEPGTPEI). 2 stretches are compositionally biased toward low complexity: residues 270–281 (QQQQQQQQPLQQ) and 361–379 (SESSASEVNSGSSSSYSTS). Residues 448-696 (TGAGINKKQI…REPIERMRRQ (249 aa)) are rich in charged AA. Thr478, Thr484, and Thr489 each carry phosphothreonine. 2 short sequence motifs (nuclear localization signal) span residues 512–520 (PKKDKPKEK) and 534–538 (QPRVR). 2 disordered regions span residues 555 to 586 (DVGEPEVVDAEEEDEVFRPTNASTCNDKKLEA) and 603 to 696 (PASL…MRRQ). A compositionally biased stretch (acidic residues) spans 557-569 (GEPEVVDAEEEDE). Composition is skewed to basic and acidic residues over residues 607–624 (RGEREKDRDRDRDSDKEN) and 685–696 (RPREPIERMRRQ).

Its subcellular location is the nucleus envelope. The protein localises to the nucleus. It is found in the nucleoplasm. The protein resides in the cytoplasm. In terms of biological role, cell cycle-dependent nuclear envelope component required for embryonic mitosis. The chain is Mitosis initiation protein fs(1)Ya (fs(1)Ya) from Drosophila melanogaster (Fruit fly).